The sequence spans 358 residues: tRNA-specific 2-thiouridylase MnmA (358 aa).

ATP-binding positions include 6 to 13 (AMSGGVDS) and leucine 32. Catalysis depends on cysteine 101, which acts as the Nucleophile. Cysteine 101 and cysteine 193 are joined by a disulfide. ATP is bound at residue glycine 125. The interaction with tRNA stretch occupies residues 143–145 (KDQ). Cysteine 193 acts as the Cysteine persulfide intermediate in catalysis.

This sequence belongs to the MnmA/TRMU family.

It localises to the cytoplasm. The catalysed reaction is S-sulfanyl-L-cysteinyl-[protein] + uridine(34) in tRNA + AH2 + ATP = 2-thiouridine(34) in tRNA + L-cysteinyl-[protein] + A + AMP + diphosphate + H(+). In terms of biological role, catalyzes the 2-thiolation of uridine at the wobble position (U34) of tRNA, leading to the formation of s(2)U34. In Mycolicibacterium paratuberculosis (strain ATCC BAA-968 / K-10) (Mycobacterium paratuberculosis), this protein is tRNA-specific 2-thiouridylase MnmA.